The following is a 597-amino-acid chain: Elongation factor 4 (597 aa).

The region spanning lysine 2–valine 184 is the tr-type G domain. GTP contacts are provided by residues aspartate 14 to threonine 19 and asparagine 131 to aspartate 134.

This sequence belongs to the TRAFAC class translation factor GTPase superfamily. Classic translation factor GTPase family. LepA subfamily.

It is found in the cell inner membrane. The catalysed reaction is GTP + H2O = GDP + phosphate + H(+). In terms of biological role, required for accurate and efficient protein synthesis under certain stress conditions. May act as a fidelity factor of the translation reaction, by catalyzing a one-codon backward translocation of tRNAs on improperly translocated ribosomes. Back-translocation proceeds from a post-translocation (POST) complex to a pre-translocation (PRE) complex, thus giving elongation factor G a second chance to translocate the tRNAs correctly. Binds to ribosomes in a GTP-dependent manner. This chain is Elongation factor 4, found in Aeromonas salmonicida (strain A449).